The primary structure comprises 407 residues: Tryptophan 2,3-dioxygenase B (407 aa).

Substrate is bound by residues 71–75 (FIVTH) and Arg143. His327 lines the heme pocket. Position 341 (Thr341) interacts with substrate.

Belongs to the tryptophan 2,3-dioxygenase family. As to quaternary structure, homotetramer. Dimer of dimers. Heme serves as cofactor.

It catalyses the reaction L-tryptophan + O2 = N-formyl-L-kynurenine. Its pathway is amino-acid degradation; L-tryptophan degradation via kynurenine pathway; L-kynurenine from L-tryptophan: step 1/2. Heme-dependent dioxygenase that catalyzes the oxidative cleavage of the L-tryptophan (L-Trp) pyrrole ring and converts L-tryptophan to N-formyl-L-kynurenine. Catalyzes the oxidative cleavage of the indole moiety. This Danio rerio (Zebrafish) protein is Tryptophan 2,3-dioxygenase B.